An 81-amino-acid polypeptide reads, in one-letter code: MSARKKNRIHVFFVSIMIIISLVSGFGEGIKQINYKDLIKDTIPGCTSKNPKECVKVPANTYHRGCEISTRCHREQHSSSG.

Residues 1 to 29 (MSARKKNRIHVFFVSIMIIISLVSGFGEG) form the signal peptide. Cystine bridges form between cysteine 46–cysteine 54 and cysteine 66–cysteine 72.

This sequence belongs to the plant rapid alkalinization factor (RALF) family.

Its subcellular location is the secreted. Its function is as follows. Cell signaling peptide that may regulate plant stress, growth, and development. Mediates a rapid alkalinization of extracellular space by mediating a transient increase in the cytoplasmic Ca(2+) concentration leading to a calcium-dependent signaling events through a cell surface receptor and a concomitant activation of some intracellular mitogen-activated protein kinases. The protein is Protein RALF-like 7 (RALFL7) of Arabidopsis thaliana (Mouse-ear cress).